Here is an 89-residue protein sequence, read N- to C-terminus: Small ribosomal subunit protein uS15 (89 aa).

Belongs to the universal ribosomal protein uS15 family. Part of the 30S ribosomal subunit. Forms a bridge to the 50S subunit in the 70S ribosome, contacting the 23S rRNA.

In terms of biological role, one of the primary rRNA binding proteins, it binds directly to 16S rRNA where it helps nucleate assembly of the platform of the 30S subunit by binding and bridging several RNA helices of the 16S rRNA. Its function is as follows. Forms an intersubunit bridge (bridge B4) with the 23S rRNA of the 50S subunit in the ribosome. This chain is Small ribosomal subunit protein uS15, found in Elusimicrobium minutum (strain Pei191).